The primary structure comprises 137 residues: Nucleoside diphosphate kinase (137 aa).

Residues K9, F57, R85, T91, R102, and N112 each contribute to the ATP site. H115 acts as the Pros-phosphohistidine intermediate in catalysis.

Belongs to the NDK family. Homotetramer. Mg(2+) is required as a cofactor.

The protein resides in the cytoplasm. The catalysed reaction is a 2'-deoxyribonucleoside 5'-diphosphate + ATP = a 2'-deoxyribonucleoside 5'-triphosphate + ADP. It carries out the reaction a ribonucleoside 5'-diphosphate + ATP = a ribonucleoside 5'-triphosphate + ADP. Its function is as follows. Major role in the synthesis of nucleoside triphosphates other than ATP. The ATP gamma phosphate is transferred to the NDP beta phosphate via a ping-pong mechanism, using a phosphorylated active-site intermediate. This is Nucleoside diphosphate kinase from Campylobacter hominis (strain ATCC BAA-381 / DSM 21671 / CCUG 45161 / LMG 19568 / NCTC 13146 / CH001A).